Here is a 204-residue protein sequence, read N- to C-terminus: Leucyl/phenylalanyl-tRNA--protein transferase (204 aa).

The protein belongs to the L/F-transferase family.

The protein localises to the cytoplasm. It carries out the reaction N-terminal L-lysyl-[protein] + L-leucyl-tRNA(Leu) = N-terminal L-leucyl-L-lysyl-[protein] + tRNA(Leu) + H(+). The enzyme catalyses N-terminal L-arginyl-[protein] + L-leucyl-tRNA(Leu) = N-terminal L-leucyl-L-arginyl-[protein] + tRNA(Leu) + H(+). The catalysed reaction is L-phenylalanyl-tRNA(Phe) + an N-terminal L-alpha-aminoacyl-[protein] = an N-terminal L-phenylalanyl-L-alpha-aminoacyl-[protein] + tRNA(Phe). Functionally, functions in the N-end rule pathway of protein degradation where it conjugates Leu, Phe and, less efficiently, Met from aminoacyl-tRNAs to the N-termini of proteins containing an N-terminal arginine or lysine. This chain is Leucyl/phenylalanyl-tRNA--protein transferase, found in Brucella anthropi (strain ATCC 49188 / DSM 6882 / CCUG 24695 / JCM 21032 / LMG 3331 / NBRC 15819 / NCTC 12168 / Alc 37) (Ochrobactrum anthropi).